A 676-amino-acid polypeptide reads, in one-letter code: UvrABC system protein B (676 aa).

Positions 35-192 (QGVADGLMYQ…ARLVAMQYTR (158 aa)) constitute a Helicase ATP-binding domain. 48 to 55 (GVTGSGKT) is a binding site for ATP. Positions 101-124 (YYDYYQPEAYVPTRDLFIEKDSSV) match the Beta-hairpin motif. The region spanning 439-605 (QVDDLLGEIR…GVNKAVRELI (167 aa)) is the Helicase C-terminal domain. The UVR domain maps to 634 to 669 (AREIKRLEKLMMDHARNLEFEQAAAARDALTALKNR).

Belongs to the UvrB family. As to quaternary structure, forms a heterotetramer with UvrA during the search for lesions. Interacts with UvrC in an incision complex.

It localises to the cytoplasm. Its function is as follows. The UvrABC repair system catalyzes the recognition and processing of DNA lesions. A damage recognition complex composed of 2 UvrA and 2 UvrB subunits scans DNA for abnormalities. Upon binding of the UvrA(2)B(2) complex to a putative damaged site, the DNA wraps around one UvrB monomer. DNA wrap is dependent on ATP binding by UvrB and probably causes local melting of the DNA helix, facilitating insertion of UvrB beta-hairpin between the DNA strands. Then UvrB probes one DNA strand for the presence of a lesion. If a lesion is found the UvrA subunits dissociate and the UvrB-DNA preincision complex is formed. This complex is subsequently bound by UvrC and the second UvrB is released. If no lesion is found, the DNA wraps around the other UvrB subunit that will check the other stand for damage. In Bordetella avium (strain 197N), this protein is UvrABC system protein B.